The chain runs to 585 residues: MANNKSAIELKNIVVDFGESVAIDNINLSVEKHQLVSLLGPSGCGKTTTLAVIAGLIKPTSGQVLFNGYDVTKKPPQERKLGLVFQNYALYPHMNVFENIVFPLYSDNSWKQAVLEKNSVANHEINCLLLTSNGASVQEIDQLNKLFHDSIEKPKQIQYQINDLNVSVFKNLNELTANLKLIPSKHQFAITNLNKQTLKQINELEAEFKTKWKLQKQTPIKSGVEHNAKLQAIKQHFSYEKQRLKKHYFKTKVELKQTLVENLKLVKKAISEQTKLIKQSSDYTKLKQLKRLIKVEPNQLKKQYKVFLNQLIKNYSLKTDKLTDTQLNEIEQIKTRIVSIKQFINKTALEVANKLAITKILTKRPDKISGGQQQRVAIARAIVRRPKLLLMDEPLSNLDAKLRVQTRQWIRQFQQELQITTVFVTHDQEEAMSISDVIVCMSTGKVQQIGTPSELYLKPANEFVARFLGTPEMNIIECSVKNNQLFWNNHLLVTESFKLNVEKLLVGFRYEQLVVTTNKSSLQAKLINIENLGKHLVATISLFDTTLSMRLELNSHLKVGDSLNFIIKANNLHFFDIDTKQRIEI.

Positions 8–468 constitute an ABC transporter domain; it reads IELKNIVVDF…PANEFVARFL (461 aa). ATP is bound at residue 40–47; sequence GPSGCGKT.

The protein belongs to the ABC transporter superfamily.

The chain is Putative ABC transporter ATP-binding protein MG187 from Mycoplasma genitalium (strain ATCC 33530 / DSM 19775 / NCTC 10195 / G37) (Mycoplasmoides genitalium).